Reading from the N-terminus, the 122-residue chain is Basic phospholipase A2 CbII (122 aa).

Cystine bridges form between Cys-26/Cys-115, Cys-28/Cys-44, Cys-43/Cys-95, Cys-49/Cys-122, Cys-50/Cys-88, Cys-57/Cys-81, and Cys-75/Cys-86. Ca(2+) is bound by residues Tyr-27, Gly-29, and Gly-31. His-47 is an active-site residue. Asp-48 is a Ca(2+) binding site. Asp-89 is a catalytic residue.

The protein belongs to the phospholipase A2 family. Group I subfamily. D49 sub-subfamily. Heterodimer of an acidic subunit (CbIalpha or CbIbeta) and a basic subunit (CbII). The acidic subunit is non-toxic, and increases the toxicity of the basic subunit. Ca(2+) serves as cofactor. As to expression, expressed by the venom gland.

Its subcellular location is the secreted. It catalyses the reaction a 1,2-diacyl-sn-glycero-3-phosphocholine + H2O = a 1-acyl-sn-glycero-3-phosphocholine + a fatty acid + H(+). Its function is as follows. Heterodimer: presynaptic neurotoxin. Functionally, monomer: Snake venom phospholipase A2 (PLA2) that exhibits strong anticoagulant effects by binding to factor Xa (F10) and inhibiting the prothrombinase activity (IC(50) is 20 nM). PLA2 catalyzes the calcium-dependent hydrolysis of the 2-acyl groups in 3-sn-phosphoglycerides. The sequence is that of Basic phospholipase A2 CbII from Pseudocerastes fieldi (Field's horned viper).